The chain runs to 153 residues: 1,4-dihydroxy-2-naphthoyl-CoA hydrolase (153 aa).

Aspartate 21 is an active-site residue.

The protein belongs to the 4-hydroxybenzoyl-CoA thioesterase family. DHNA-CoA hydrolase subfamily.

It carries out the reaction 1,4-dihydroxy-2-naphthoyl-CoA + H2O = 1,4-dihydroxy-2-naphthoate + CoA + H(+). Its pathway is cofactor biosynthesis; phylloquinone biosynthesis. The protein operates within quinol/quinone metabolism; 1,4-dihydroxy-2-naphthoate biosynthesis; 1,4-dihydroxy-2-naphthoate from chorismate: step 7/7. In terms of biological role, catalyzes the hydrolysis of 1,4-dihydroxy-2-naphthoyl-CoA (DHNA-CoA) to 1,4-dihydroxy-2-naphthoate (DHNA), a reaction involved in phylloquinone (vitamin K1) biosynthesis. This chain is 1,4-dihydroxy-2-naphthoyl-CoA hydrolase, found in Synechococcus sp. (strain WH7803).